We begin with the raw amino-acid sequence, 423 residues long: tRNA(Ile)-lysidine synthase (423 aa).

43–48 (SSGVDS) is a binding site for ATP.

Belongs to the tRNA(Ile)-lysidine synthase family.

The protein resides in the cytoplasm. It carries out the reaction cytidine(34) in tRNA(Ile2) + L-lysine + ATP = lysidine(34) in tRNA(Ile2) + AMP + diphosphate + H(+). In terms of biological role, ligates lysine onto the cytidine present at position 34 of the AUA codon-specific tRNA(Ile) that contains the anticodon CAU, in an ATP-dependent manner. Cytidine is converted to lysidine, thus changing the amino acid specificity of the tRNA from methionine to isoleucine. The polypeptide is tRNA(Ile)-lysidine synthase (Helicobacter hepaticus (strain ATCC 51449 / 3B1)).